The primary structure comprises 104 residues: L-rhamnose mutarotase (104 aa).

Tyrosine 18 is a substrate binding site. Histidine 22 (proton donor) is an active-site residue. Substrate contacts are provided by residues tyrosine 41 and 76-77; that span reads WW.

It belongs to the rhamnose mutarotase family. Homodimer.

It is found in the cytoplasm. The enzyme catalyses alpha-L-rhamnose = beta-L-rhamnose. It functions in the pathway carbohydrate metabolism; L-rhamnose metabolism. Involved in the anomeric conversion of L-rhamnose. This Burkholderia ambifaria (strain MC40-6) protein is L-rhamnose mutarotase.